The chain runs to 434 residues: UDP-N-acetylglucosamine 1-carboxyvinyltransferase (434 aa).

Lys22 to Asn23 provides a ligand contact to phosphoenolpyruvate. Residue Arg97 coordinates UDP-N-acetyl-alpha-D-glucosamine. Asp121 functions as the Proton donor in the catalytic mechanism. 2 residues coordinate UDP-N-acetyl-alpha-D-glucosamine: Asp319 and Met341.

It belongs to the EPSP synthase family. MurA subfamily.

Its subcellular location is the cytoplasm. It catalyses the reaction phosphoenolpyruvate + UDP-N-acetyl-alpha-D-glucosamine = UDP-N-acetyl-3-O-(1-carboxyvinyl)-alpha-D-glucosamine + phosphate. It participates in cell wall biogenesis; peptidoglycan biosynthesis. Functionally, cell wall formation. Adds enolpyruvyl to UDP-N-acetylglucosamine. The chain is UDP-N-acetylglucosamine 1-carboxyvinyltransferase from Bacteroides thetaiotaomicron (strain ATCC 29148 / DSM 2079 / JCM 5827 / CCUG 10774 / NCTC 10582 / VPI-5482 / E50).